The following is a 341-amino-acid chain: Brain-specific homeobox/POU domain protein 3 (341 aa).

The POU-IV box motif lies at 55 to 65 (RGAEALAAVDI). Positions 182-259 (ETETDPRELE…ILEAWLEEAE (78 aa)) constitute a POU-specific domain. Positions 277-336 (KKRKRTSIAAPEKRSLEAYFAVQPRPSSEKIAAIAEKLDLKKNVVRVWFCNQRQKQKRMK) form a DNA-binding region, homeobox.

The protein belongs to the POU transcription factor family. Class-4 subfamily.

The protein localises to the nucleus. Functionally, may play a role in specifying terminally differentiated neuronal phenotypes. The chain is Brain-specific homeobox/POU domain protein 3 (BRN3) from Gallus gallus (Chicken).